The chain runs to 434 residues: Putative ZDHHC-type palmitoyltransferase 1 (434 aa).

The next 2 helical transmembrane spans lie at 25 to 45 (AYFI…LIFV) and 53 to 73 (ITAA…IFLI). Residues 115-165 (KWCETCCLYRPPRANHCGICNNCVERFDHHCPWVGNCIGRRNYQTFLYFLY) form the DHHC domain. Residue C145 is the S-palmitoyl cysteine intermediate of the active site. Residues 160 to 180 (FLYFLYSLGFLCIWIMGFCVA) form a helical membrane-spanning segment. 9 N-linked (GlcNAc...) asparagine glycosylation sites follow: N207, N216, N274, N346, N362, N373, N381, N387, and N393. The tract at residues 262–330 (TIPTPNNING…ISPPQMLQRQ (69 aa)) is disordered. Positions 267-316 (NNINGNNNNSINNNNNNNNNNNNNNNNNNNNNNNNNNINNGNSGGTTNNG) are enriched in low complexity. Positions 365 to 434 (TISEDKPKNL…SLNHELQVNV (70 aa)) are disordered. Over residues 373–387 (NLSNSNNNNNTNNKN) the composition is skewed to low complexity. A compositionally biased stretch (basic and acidic residues) spans 409-419 (DDFKSDNDKEI). N420 carries N-linked (GlcNAc...) asparagine glycosylation. Residues 420–434 (NSSSLSLNHELQVNV) show a composition bias toward polar residues.

The protein belongs to the DHHC palmitoyltransferase family.

It localises to the membrane. The enzyme catalyses L-cysteinyl-[protein] + hexadecanoyl-CoA = S-hexadecanoyl-L-cysteinyl-[protein] + CoA. The protein is Putative ZDHHC-type palmitoyltransferase 1 of Dictyostelium discoideum (Social amoeba).